The sequence spans 446 residues: Histidine--tRNA ligase (446 aa).

The protein belongs to the class-II aminoacyl-tRNA synthetase family. In terms of assembly, homodimer.

It localises to the cytoplasm. It catalyses the reaction tRNA(His) + L-histidine + ATP = L-histidyl-tRNA(His) + AMP + diphosphate + H(+). This Burkholderia pseudomallei (strain 668) protein is Histidine--tRNA ligase.